We begin with the raw amino-acid sequence, 289 residues long: ATP synthase subunit a (289 aa).

The next 6 membrane-spanning stretches (helical) occupy residues 43–63 (AFHL…LLIF), 103–123 (VIAP…AVDL), 160–180 (FCVF…GGFI), 193–213 (IFVQ…TLIA), 232–252 (VFIL…GLGV), and 259–279 (AVFH…LTIV).

Belongs to the ATPase A chain family. In terms of assembly, F-type ATPases have 2 components, CF(1) - the catalytic core - and CF(0) - the membrane proton channel. CF(1) has five subunits: alpha(3), beta(3), gamma(1), delta(1), epsilon(1). CF(0) has three main subunits: a(1), b(2) and c(9-12). The alpha and beta chains form an alternating ring which encloses part of the gamma chain. CF(1) is attached to CF(0) by a central stalk formed by the gamma and epsilon chains, while a peripheral stalk is formed by the delta and b chains.

The protein localises to the cell inner membrane. Its function is as follows. Key component of the proton channel; it plays a direct role in the translocation of protons across the membrane. The chain is ATP synthase subunit a from Pseudomonas putida (strain ATCC 700007 / DSM 6899 / JCM 31910 / BCRC 17059 / LMG 24140 / F1).